A 208-amino-acid chain; its full sequence is Uracil phosphoribosyltransferase (208 aa).

Residues R78, R103, and D130–S138 contribute to the 5-phospho-alpha-D-ribose 1-diphosphate site. Uracil contacts are provided by residues I193 and G198–A200. D199 contributes to the 5-phospho-alpha-D-ribose 1-diphosphate binding site.

It belongs to the UPRTase family. Mg(2+) is required as a cofactor.

The catalysed reaction is UMP + diphosphate = 5-phospho-alpha-D-ribose 1-diphosphate + uracil. Its pathway is pyrimidine metabolism; UMP biosynthesis via salvage pathway; UMP from uracil: step 1/1. Allosterically activated by GTP. Catalyzes the conversion of uracil and 5-phospho-alpha-D-ribose 1-diphosphate (PRPP) to UMP and diphosphate. This Thermosipho africanus (strain TCF52B) protein is Uracil phosphoribosyltransferase.